Consider the following 105-residue polypeptide: Large ribosomal subunit protein uL24 (105 aa).

This sequence belongs to the universal ribosomal protein uL24 family. As to quaternary structure, part of the 50S ribosomal subunit.

In terms of biological role, one of two assembly initiator proteins, it binds directly to the 5'-end of the 23S rRNA, where it nucleates assembly of the 50S subunit. Its function is as follows. One of the proteins that surrounds the polypeptide exit tunnel on the outside of the subunit. The chain is Large ribosomal subunit protein uL24 from Methylococcus capsulatus (strain ATCC 33009 / NCIMB 11132 / Bath).